A 240-amino-acid polypeptide reads, in one-letter code: uncharacterized protein (240 aa).

Residues 216–240 (MKQSKNKPRIRQAVGATRQCRKPQA) are disordered.

This is an uncharacterized protein from Escherichia coli (strain K12).